Reading from the N-terminus, the 573-residue chain is Solute carrier family 41 member 2 (573 aa).

The Extracellular segment spans residues 1-162 (MTHSKGRPVT…KESSGVMALQ (162 aa)). Ser-137 and Ser-138 each carry phosphoserine. The chain crosses the membrane as a helical span at residues 163–183 (ILVPFLLAGFGTVSAGMVLDI). Residues 184–195 (VQHWEVFKNVTE) lie on the Cytoplasmic side of the membrane. The helical transmembrane segment at 196–216 (VFILVPALLGLKGNLEMTLAS) threads the bilayer. Over 217–245 (RLSTAVNVGKMDSPIEKWNLIIGNLALKQ) the chain is Extracellular. Residues 246 to 266 (VQATVVGFLAAVAAIILGWIP) form a helical membrane-spanning segment. The Cytoplasmic segment spans residues 267 to 282 (EGKYYLSHSILLCSSS). Residues 283-303 (VATAFIASLLQGIIMVGVIVG) traverse the membrane as a helical segment. Residues 304–313 (SKKTGINPDN) lie on the Extracellular side of the membrane. A helical transmembrane segment spans residues 314–334 (VATPIAASFGDLITLAILAWI). The Cytoplasmic segment spans residues 335–347 (SQGLYSCLETYYY). The chain crosses the membrane as a helical span at residues 348–368 (ISPLVCAFFLALTPIWIIIAA). At 369-376 (KHPATRTV) the chain is on the extracellular side. Residues 377-397 (LHSGWEPVITAMVISSIGGLI) form a helical membrane-spanning segment. The Cytoplasmic segment spans residues 398–406 (LDTTVSDPN). The chain crosses the membrane as a helical span at residues 407 to 427 (LVGIVVYTPVINGIGGNLVAI). At 428–469 (QASRISTYLHLHSIPGELPEEPKGCSYPFRTFFGSGVNNKSA) the chain is on the extracellular side. A helical transmembrane segment spans residues 470–490 (QVLLLFVIPGHLIFLYTIHLM). Over 491–498 (KSGHTSLT) the chain is Cytoplasmic. A helical membrane pass occupies residues 499–519 (VVFVVVYLFAAVLQVFTLLWI). The Extracellular portion of the chain corresponds to 520–543 (ADWMVHRFWRKGKDPDSFSIPYLT). A helical membrane pass occupies residues 544–564 (ALGDLLGTALLALSFHFLWLI). Topologically, residues 565–573 (GDRDGDVGD) are cytoplasmic.

This sequence belongs to the SLC41A transporter family.

It is found in the cell membrane. It catalyses the reaction Mg(2+)(in) = Mg(2+)(out). The enzyme catalyses Mn(2+)(in) = Mn(2+)(out). It carries out the reaction Co(2+)(in) = Co(2+)(out). The catalysed reaction is Ni(2+)(in) = Ni(2+)(out). It catalyses the reaction Fe(2+)(in) = Fe(2+)(out). Its function is as follows. Acts as a plasma-membrane magnesium transporter. Can also mediate the transport of other divalent metal cations in an order of Ba(2+) &gt; Ni(2+) &gt; Co(2+) &gt; Fe(2+) &gt; Mn(2+). The chain is Solute carrier family 41 member 2 (Slc41a2) from Mus musculus (Mouse).